Here is a 237-residue protein sequence, read N- to C-terminus: Lipoprotein-releasing system ATP-binding protein LolD (237 aa).

One can recognise an ABC transporter domain in the interval 16–237 (LKCEGLTRIY…LDQGRLSEDA (222 aa)). ATP is bound at residue 52–59 (GSSGSGKT).

The protein belongs to the ABC transporter superfamily. Lipoprotein translocase (TC 3.A.1.125) family. The complex is composed of two ATP-binding proteins (LolD) and two transmembrane proteins (LolC and LolE).

The protein localises to the cell inner membrane. Functionally, part of the ABC transporter complex LolCDE involved in the translocation of mature outer membrane-directed lipoproteins, from the inner membrane to the periplasmic chaperone, LolA. Responsible for the formation of the LolA-lipoprotein complex in an ATP-dependent manner. The polypeptide is Lipoprotein-releasing system ATP-binding protein LolD (Chromohalobacter salexigens (strain ATCC BAA-138 / DSM 3043 / CIP 106854 / NCIMB 13768 / 1H11)).